Here is a 152-residue protein sequence, read N- to C-terminus: Flagellar assembly factor FliW (152 aa).

The protein belongs to the FliW family. Interacts with translational regulator CsrA and flagellin(s).

It is found in the cytoplasm. In terms of biological role, acts as an anti-CsrA protein, binds CsrA and prevents it from repressing translation of its target genes, one of which is flagellin. Binds to flagellin and participates in the assembly of the flagellum. This chain is Flagellar assembly factor FliW, found in Caldicellulosiruptor saccharolyticus (strain ATCC 43494 / DSM 8903 / Tp8T 6331).